We begin with the raw amino-acid sequence, 493 residues long: BICD family-like cargo adapter 2 (493 aa).

Coiled coils occupy residues 56-275 (ELGK…ELHM) and 365-431 (MQHV…LLST).

The protein belongs to the BICDR family.

The protein is BICD family-like cargo adapter 2 (bicdl2) of Xenopus laevis (African clawed frog).